The sequence spans 1302 residues: Zinc finger protein 536 (1302 aa).

Positions 1–26 (MEEASLCLGVSSTAPEAEPHLSGPVL) are disordered. 7 C2H2-type zinc fingers span residues 130–152 (YPCPLCGKRFRFNSILSLHMRTH), 158–180 (FKCPYCDHRAAQKGNLKIHLRTH), 274–297 (FRCTFCKGKFKKREELDRHIRILH), 300–323 (YKCTLCDFAASQEEELISHVEKAH), 345–367 (FRCEVCGQVFSQAWFLKGHMRKH), 373–395 (HCCQICGRRFKEPWFLKNHMKVH), and 631–653 (TECPDCGRVFRTYHQVVVHSRVH). The disordered stretch occupies residues 650 to 736 (SRVHKRDRKS…IGEEAGRAGG (87 aa)). Residues 657-676 (RKSDEDALHVGVGLEERRGS) show a composition bias toward basic and acidic residues. Positions 677–698 (GSDQESQSVSRSTTPGSSNVTE) are enriched in polar residues. 2 C2H2-type zinc fingers span residues 753 to 775 (KDCPYCGKTFRTSHHLKVHLRIH) and 781 to 803 (YKCPHCDYAGTQSASLKYHLERH). Disordered regions lie at residues 804–832 (HRERQNGAGPLSGQPPNQEHKDETSSKAP), 855–897 (GPAS…SKSS), 935–988 (KDTK…APTL), and 1133–1261 (NKNT…GLEK). 2 positions are modified to phosphoserine: serine 828 and serine 829. The span at 869-883 (GDHSGQATGMPSELS) shows a compositional bias: polar residues. Basic and acidic residues predominate over residues 935–973 (KDTKDKVPSDAHPMKAHTAEGGEEKASMKPSQRKSEKSQ). Acidic residues-rich tracts occupy residues 1161–1171 (DLSDIASSEDM) and 1179–1188 (NEDEELDTEP). Residues 1198–1212 (LSKDGSSEGGDSLLS) are compositionally biased toward low complexity.

This sequence belongs to the krueppel C2H2-type zinc-finger protein family. Expressed predominantly in the brain, while a weak signal is also detected in the heart and testis. Expression is abundant in neuronal cells of the cerebral cortex, hippocampus and hypothalamic area (at protein level).

Its subcellular location is the nucleus. Transcriptional repressor that negatively regulates neuron differentiation by repressing retinoic acid-induced gene transcription. Binds and interrupts RARA from binding to retinoic acid response elements (RARE) composed of tandem 5'-AGGTCA-3' sites known as DR1-DR5. Recognizes and binds 2 copies of the core DNA sequence 5'-CCCCCA-3'. The sequence is that of Zinc finger protein 536 (Znf536) from Mus musculus (Mouse).